The primary structure comprises 142 residues: U1 small nuclear ribonucleoprotein C (142 aa).

The Matrin-type zinc-finger motif lies at 4–36 (YYCDYCDTFLTHDSPSVRKTHNGGRKHKDNVRM).

It belongs to the U1 small nuclear ribonucleoprotein C family. In terms of assembly, U1 snRNP is composed of the 7 core Sm proteins B/B', D1, D2, D3, E, F and G that assemble in a heptameric protein ring on the Sm site of the small nuclear RNA to form the core snRNP, and at least 3 U1 snRNP-specific proteins U1-70K, U1-A and U1-C. U1-C interacts with U1 snRNA and the 5' splice-site region of the pre-mRNA.

The protein resides in the nucleus. Component of the spliceosomal U1 snRNP, which is essential for recognition of the pre-mRNA 5' splice-site and the subsequent assembly of the spliceosome. U1-C is directly involved in initial 5' splice-site recognition for both constitutive and regulated alternative splicing. The interaction with the 5' splice-site seems to precede base-pairing between the pre-mRNA and the U1 snRNA. Stimulates commitment or early (E) complex formation by stabilizing the base pairing of the 5' end of the U1 snRNA and the 5' splice-site region. This is U1 small nuclear ribonucleoprotein C from Caenorhabditis elegans.